A 395-amino-acid chain; its full sequence is Testis-expressed protein 44 (395 aa).

Disordered regions lie at residues Met1–Ala32, Trp46–Ser100, Lys133–Ser215, and Phe235–Pro258. Residues Ser53–Ser65 show a composition bias toward polar residues. The span at Pro87–Gln98 shows a compositional bias: low complexity. Basic and acidic residues predominate over residues Ser192 to Ala207. Ser333 carries the phosphoserine modification.

Testis. Detected in germ cells at all stages of the seminiferous epithelium, strong expression in elongating spermatids (at protein level).

The protein localises to the cytoplasm. This is Testis-expressed protein 44 from Homo sapiens (Human).